The following is a 67-amino-acid chain: Protein AaeX (67 aa).

2 consecutive transmembrane segments (helical) span residues 3-23 (LFPV…ELLL) and 47-67 (PALF…RLFV).

This sequence belongs to the AaeX family.

It is found in the cell membrane. This Escherichia coli O157:H7 protein is Protein AaeX.